Reading from the N-terminus, the 94-residue chain is Pyrimidine/purine nucleoside phosphorylase (94 aa).

Belongs to the nucleoside phosphorylase PpnP family.

The catalysed reaction is a purine D-ribonucleoside + phosphate = a purine nucleobase + alpha-D-ribose 1-phosphate. It catalyses the reaction adenosine + phosphate = alpha-D-ribose 1-phosphate + adenine. It carries out the reaction cytidine + phosphate = cytosine + alpha-D-ribose 1-phosphate. The enzyme catalyses guanosine + phosphate = alpha-D-ribose 1-phosphate + guanine. The catalysed reaction is inosine + phosphate = alpha-D-ribose 1-phosphate + hypoxanthine. It catalyses the reaction thymidine + phosphate = 2-deoxy-alpha-D-ribose 1-phosphate + thymine. It carries out the reaction uridine + phosphate = alpha-D-ribose 1-phosphate + uracil. The enzyme catalyses xanthosine + phosphate = alpha-D-ribose 1-phosphate + xanthine. In terms of biological role, catalyzes the phosphorolysis of diverse nucleosides, yielding D-ribose 1-phosphate and the respective free bases. Can use uridine, adenosine, guanosine, cytidine, thymidine, inosine and xanthosine as substrates. Also catalyzes the reverse reactions. This is Pyrimidine/purine nucleoside phosphorylase from Pseudomonas fluorescens (strain Pf0-1).